Consider the following 83-residue polypeptide: MSSGGLLLLLGLLTLWAELTPVSSKDHPEFCELPADSGPCRGILHAFYYHPVHRTCLGFIYGGCYGNANNFKTIDECKRTCAA.

Residues 1-24 form the signal peptide; it reads MSSGGLLLLLGLLTLWAELTPVSS. The region spanning 31 to 81 is the BPTI/Kunitz inhibitor domain; the sequence is CELPADSGPCRGILHAFYYHPVHRTCLGFIYGGCYGNANNFKTIDECKRTC. Disulfide bonds link cysteine 31–cysteine 81, cysteine 40–cysteine 64, and cysteine 56–cysteine 77.

Belongs to the venom Kunitz-type family. As to expression, expressed by the venom gland.

It is found in the secreted. Its function is as follows. Serine protease inhibitor. The sequence is that of Kunitz-type serine protease inhibitor scutellin-4 from Oxyuranus scutellatus scutellatus (Australian taipan).